A 144-amino-acid polypeptide reads, in one-letter code: Putative pre-16S rRNA nuclease (144 aa).

Belongs to the YqgF nuclease family.

The protein resides in the cytoplasm. In terms of biological role, could be a nuclease involved in processing of the 5'-end of pre-16S rRNA. This chain is Putative pre-16S rRNA nuclease, found in Lacticaseibacillus casei (strain BL23) (Lactobacillus casei).